The chain runs to 253 residues: Ribonuclease PH (253 aa).

Phosphate is bound by residues arginine 86 and 124–126 (GTR).

It belongs to the RNase PH family. In terms of assembly, homohexameric ring arranged as a trimer of dimers.

The catalysed reaction is tRNA(n+1) + phosphate = tRNA(n) + a ribonucleoside 5'-diphosphate. Functionally, phosphorolytic 3'-5' exoribonuclease that plays an important role in tRNA 3'-end maturation. Removes nucleotide residues following the 3'-CCA terminus of tRNAs; can also add nucleotides to the ends of RNA molecules by using nucleoside diphosphates as substrates, but this may not be physiologically important. Probably plays a role in initiation of 16S rRNA degradation (leading to ribosome degradation) during starvation. The polypeptide is Ribonuclease PH (Brevibacillus brevis (strain 47 / JCM 6285 / NBRC 100599)).